The chain runs to 243 residues: Juxtaposed with another zinc finger protein 1 (243 aa).

The C2H2-type 1 zinc-finger motif lies at 12–37 (NTCRFGGCGLHFPTLADLIEHIEDNH). Residues 39 to 79 (DTDPRVLEKQELQQPTYVALSYINRFMTDAARREQESLKKK) form a required for interaction with NR2C2 region. Positions 89 to 108 (SSSVSRGNVSTPPRHSSGSL) are enriched in polar residues. The disordered stretch occupies residues 89 to 151 (SSSVSRGNVS…SDSDESWTTE (63 aa)). 2 positions are modified to phosphothreonine: Thr-109 and Thr-113. A compositionally biased stretch (low complexity) spans 118–130 (PSSSFRSSTPTGS). The segment covering 131–148 (EYDEEEVDYEESDSDESW) has biased composition (acidic residues). A C2H2-type 2 zinc finger spans residues 173-198 (FACPVPGCKKRYKNVNGIKYHAKNGH). A C2H2-type 3; degenerate zinc finger spans residues 208 to 230 (FKCRCGKSYKTAQGLRHHTINFH).

In terms of assembly, interacts with NR2C2 (via ligand-binding region). Expressed in range of tissues with highest expression levels in testis, liver, muscle and fat and lowest levels in kidney. Detected in liver and white adipose tissue (at protein level).

It is found in the nucleus. Its function is as follows. Acts as a transcriptional corepressor of orphan nuclear receptor NR2C2. Inhibits expression of the gluconeogenesis enzyme PCK2 through inhibition of NR2C2 activity. Also involved in transcriptional activation of NAMPT by promoting expression of PPARA and PPARD. Plays a role in lipid metabolism by suppressing lipogenesis, increasing lipolysis and decreasing lipid accumulation in adipose tissue. Plays a role in glucose homeostasis by improving glucose metabolism and insulin sensitivity. The chain is Juxtaposed with another zinc finger protein 1 (Jazf1) from Mus musculus (Mouse).